Here is a 196-residue protein sequence, read N- to C-terminus: Imidazole glycerol phosphate synthase subunit HisH (196 aa).

In terms of domain architecture, Glutamine amidotransferase type-1 spans 2-196 (KIIIINTNCS…EQLIKNFLEI (195 aa)). The active-site Nucleophile is C77. Catalysis depends on residues H178 and E180.

As to quaternary structure, heterodimer of HisH and HisF.

The protein resides in the cytoplasm. It carries out the reaction 5-[(5-phospho-1-deoxy-D-ribulos-1-ylimino)methylamino]-1-(5-phospho-beta-D-ribosyl)imidazole-4-carboxamide + L-glutamine = D-erythro-1-(imidazol-4-yl)glycerol 3-phosphate + 5-amino-1-(5-phospho-beta-D-ribosyl)imidazole-4-carboxamide + L-glutamate + H(+). The enzyme catalyses L-glutamine + H2O = L-glutamate + NH4(+). Its pathway is amino-acid biosynthesis; L-histidine biosynthesis; L-histidine from 5-phospho-alpha-D-ribose 1-diphosphate: step 5/9. Its function is as follows. IGPS catalyzes the conversion of PRFAR and glutamine to IGP, AICAR and glutamate. The HisH subunit catalyzes the hydrolysis of glutamine to glutamate and ammonia as part of the synthesis of IGP and AICAR. The resulting ammonia molecule is channeled to the active site of HisF. In Blochmanniella floridana, this protein is Imidazole glycerol phosphate synthase subunit HisH.